Reading from the N-terminus, the 342-residue chain is N-acetyl-gamma-glutamyl-phosphate reductase (342 aa).

The active site involves Cys149.

Belongs to the NAGSA dehydrogenase family. Type 1 subfamily.

The protein resides in the cytoplasm. It carries out the reaction N-acetyl-L-glutamate 5-semialdehyde + phosphate + NADP(+) = N-acetyl-L-glutamyl 5-phosphate + NADPH + H(+). It functions in the pathway amino-acid biosynthesis; L-arginine biosynthesis; N(2)-acetyl-L-ornithine from L-glutamate: step 3/4. Functionally, catalyzes the NADPH-dependent reduction of N-acetyl-5-glutamyl phosphate to yield N-acetyl-L-glutamate 5-semialdehyde. This Roseobacter denitrificans (strain ATCC 33942 / OCh 114) (Erythrobacter sp. (strain OCh 114)) protein is N-acetyl-gamma-glutamyl-phosphate reductase.